Consider the following 103-residue polypeptide: Large ribosomal subunit protein uL24 (103 aa).

This sequence belongs to the universal ribosomal protein uL24 family. As to quaternary structure, part of the 50S ribosomal subunit.

One of two assembly initiator proteins, it binds directly to the 5'-end of the 23S rRNA, where it nucleates assembly of the 50S subunit. Functionally, one of the proteins that surrounds the polypeptide exit tunnel on the outside of the subunit. The polypeptide is Large ribosomal subunit protein uL24 (Endomicrobium trichonymphae).